The following is a 330-amino-acid chain: Lipoyl synthase (330 aa).

Cysteine 77, cysteine 82, cysteine 88, cysteine 103, cysteine 107, cysteine 110, and serine 317 together coordinate [4Fe-4S] cluster. The Radical SAM core domain maps to 89-306 (FNHGTATFMI…RSEAERMGFE (218 aa)).

It belongs to the radical SAM superfamily. Lipoyl synthase family. [4Fe-4S] cluster is required as a cofactor.

It is found in the cytoplasm. The enzyme catalyses [[Fe-S] cluster scaffold protein carrying a second [4Fe-4S](2+) cluster] + N(6)-octanoyl-L-lysyl-[protein] + 2 oxidized [2Fe-2S]-[ferredoxin] + 2 S-adenosyl-L-methionine + 4 H(+) = [[Fe-S] cluster scaffold protein] + N(6)-[(R)-dihydrolipoyl]-L-lysyl-[protein] + 4 Fe(3+) + 2 hydrogen sulfide + 2 5'-deoxyadenosine + 2 L-methionine + 2 reduced [2Fe-2S]-[ferredoxin]. The protein operates within protein modification; protein lipoylation via endogenous pathway; protein N(6)-(lipoyl)lysine from octanoyl-[acyl-carrier-protein]: step 2/2. In terms of biological role, catalyzes the radical-mediated insertion of two sulfur atoms into the C-6 and C-8 positions of the octanoyl moiety bound to the lipoyl domains of lipoate-dependent enzymes, thereby converting the octanoylated domains into lipoylated derivatives. This is Lipoyl synthase from Actinobacillus pleuropneumoniae serotype 3 (strain JL03).